A 356-amino-acid polypeptide reads, in one-letter code: 3-dehydroquinate synthase (356 aa).

Residues 71–76, 105–109, 129–130, lysine 142, and lysine 151 contribute to the NAD(+) site; these read EGEASK, GVTGD, and TS. 3 residues coordinate Zn(2+): glutamate 184, histidine 247, and histidine 264.

Belongs to the sugar phosphate cyclases superfamily. Dehydroquinate synthase family. Co(2+) serves as cofactor. Requires Zn(2+) as cofactor. The cofactor is NAD(+).

It localises to the cytoplasm. The enzyme catalyses 7-phospho-2-dehydro-3-deoxy-D-arabino-heptonate = 3-dehydroquinate + phosphate. The protein operates within metabolic intermediate biosynthesis; chorismate biosynthesis; chorismate from D-erythrose 4-phosphate and phosphoenolpyruvate: step 2/7. Catalyzes the conversion of 3-deoxy-D-arabino-heptulosonate 7-phosphate (DAHP) to dehydroquinate (DHQ). The protein is 3-dehydroquinate synthase of Lactococcus lactis subsp. cremoris (strain SK11).